Consider the following 245-residue polypeptide: rRNA adenine N-6-methyltransferase (245 aa).

S-adenosyl-L-methionine contacts are provided by Asn10, Leu12, Gly37, Glu58, Asp83, and Ser100.

Belongs to the class I-like SAM-binding methyltransferase superfamily. rRNA adenine N(6)-methyltransferase family.

It carries out the reaction adenosine(2085) in 23S rRNA + 2 S-adenosyl-L-methionine = N(6)-dimethyladenosine(2085) in 23S rRNA + 2 S-adenosyl-L-homocysteine + 2 H(+). In terms of biological role, this protein produces a dimethylation of the adenine residue at position 2085 in 23S rRNA, resulting in reduced affinity between ribosomes and macrolide-lincosamide-streptogramin B antibiotics. The chain is rRNA adenine N-6-methyltransferase (ermBP) from Clostridium perfringens.